The primary structure comprises 412 residues: Argininosuccinate synthase (412 aa).

Residues alanine 20–serine 28 and alanine 48 each bind ATP. L-citrulline is bound by residues tyrosine 100 and serine 105. ATP is bound at residue glycine 130. Residues threonine 132, asparagine 136, and aspartate 137 each coordinate L-aspartate. Position 136 (asparagine 136) interacts with L-citrulline. L-citrulline-binding residues include arginine 140, serine 189, serine 198, glutamate 274, and tyrosine 286.

It belongs to the argininosuccinate synthase family. Type 1 subfamily. As to quaternary structure, homotetramer.

It localises to the cytoplasm. The catalysed reaction is L-citrulline + L-aspartate + ATP = 2-(N(omega)-L-arginino)succinate + AMP + diphosphate + H(+). The protein operates within amino-acid biosynthesis; L-arginine biosynthesis; L-arginine from L-ornithine and carbamoyl phosphate: step 2/3. The protein is Argininosuccinate synthase of Shewanella pealeana (strain ATCC 700345 / ANG-SQ1).